Here is a 275-residue protein sequence, read N- to C-terminus: Type III pantothenate kinase (275 aa).

9-16 (DIGNTRLK) lines the ATP pocket. Residues Tyr-114 and 121–124 (GVDR) each bind substrate. Asp-123 acts as the Proton acceptor in catalysis. ATP is bound at residue Thr-147. Thr-209 lines the substrate pocket.

The protein belongs to the type III pantothenate kinase family. In terms of assembly, homodimer. It depends on NH4(+) as a cofactor. K(+) is required as a cofactor.

The protein resides in the cytoplasm. It catalyses the reaction (R)-pantothenate + ATP = (R)-4'-phosphopantothenate + ADP + H(+). It participates in cofactor biosynthesis; coenzyme A biosynthesis; CoA from (R)-pantothenate: step 1/5. Functionally, catalyzes the phosphorylation of pantothenate (Pan), the first step in CoA biosynthesis. The chain is Type III pantothenate kinase from Cupriavidus pinatubonensis (strain JMP 134 / LMG 1197) (Cupriavidus necator (strain JMP 134)).